Consider the following 295-residue polypeptide: Acetylglutamate kinase (295 aa).

Substrate contacts are provided by residues 66–67 (GG), arginine 88, and asparagine 193.

The protein belongs to the acetylglutamate kinase family. ArgB subfamily.

The protein resides in the cytoplasm. It carries out the reaction N-acetyl-L-glutamate + ATP = N-acetyl-L-glutamyl 5-phosphate + ADP. Its pathway is amino-acid biosynthesis; L-arginine biosynthesis; N(2)-acetyl-L-ornithine from L-glutamate: step 2/4. Its function is as follows. Catalyzes the ATP-dependent phosphorylation of N-acetyl-L-glutamate. The chain is Acetylglutamate kinase from Rhizobium etli (strain ATCC 51251 / DSM 11541 / JCM 21823 / NBRC 15573 / CFN 42).